The chain runs to 176 residues: bZIP transcription factor 8 (176 aa).

The tract at residues 44-101 is disordered; it reads PNTSGGSDESMSDGSKIDPKRSPKYLEKRMKNNEAAKKSRASRKHREQKNQTENELLK. Over residues 47–57 the composition is skewed to low complexity; that stretch reads SGGSDESMSDG. Residues 58–80 are compositionally biased toward basic and acidic residues; that stretch reads SKIDPKRSPKYLEKRMKNNEAAK. The bZIP domain maps to 65-128; the sequence is SPKYLEKRMK…AQMQITIRDM (64 aa). Residues 67 to 92 are basic motif; sequence KYLEKRMKNNEAAKKSRASRKHREQK. A compositionally biased stretch (basic residues) spans 81-90; sequence KSRASRKHRE. The segment covering 91–101 has biased composition (basic and acidic residues); that stretch reads QKNQTENELLK. The segment at 100–107 is leucine-zipper; that stretch reads LKRKNAAL.

This sequence belongs to the bZIP family.

The chain is bZIP transcription factor 8 (zip-8) from Caenorhabditis elegans.